A 773-amino-acid chain; its full sequence is ATP-dependent permease MDL2, mitochondrial (773 aa).

The N-terminal 90 residues, 1–90 (MLNGRLPLLR…SPISKGSARS (90 aa)), are a transit peptide targeting the mitochondrion. The span at 73–84 (PETSLPSASPIS) shows a compositional bias: polar residues. Residues 73–95 (PETSLPSASPISKGSARSAHAKE) form a disordered region. The ABC transmembrane type-1 domain maps to 119–413 (LLTAILLLTI…LSTFYSEIMQ (295 aa)). 3 helical membrane-spanning segments follow: residues 123–143 (ILLL…IGIV), 170–192 (FLSF…FILL), and 257–277 (VVGV…LLFF). 481-488 (GPSGRGKS) contributes to the ATP binding site. Residues 493–733 (LLLRYYNPTT…DDNDNNHDND (241 aa)) enclose the ABC transporter domain. Basic and acidic residues-rich tracts occupy residues 706 to 733 (KEDL…HDND) and 740 to 762 (ETKD…DAAK). The interval 706–773 (KEDLNESKEH…ANPIKITPQP (68 aa)) is disordered.

This sequence belongs to the ABC transporter superfamily. ABCB family. Mitochondrial peptide exporter (TC 3.A.1.212) subfamily.

Its subcellular location is the mitochondrion inner membrane. This Saccharomyces cerevisiae (strain ATCC 204508 / S288c) (Baker's yeast) protein is ATP-dependent permease MDL2, mitochondrial (MDL2).